A 136-amino-acid polypeptide reads, in one-letter code: Large ribosomal subunit protein uL16 (136 aa).

The protein belongs to the universal ribosomal protein uL16 family. In terms of assembly, part of the 50S ribosomal subunit.

Binds 23S rRNA and is also seen to make contacts with the A and possibly P site tRNAs. In Pectobacterium atrosepticum (strain SCRI 1043 / ATCC BAA-672) (Erwinia carotovora subsp. atroseptica), this protein is Large ribosomal subunit protein uL16.